Here is a 303-residue protein sequence, read N- to C-terminus: UDP-3-O-acyl-N-acetylglucosamine deacetylase (303 aa).

3 residues coordinate Zn(2+): H78, H237, and D241. Residue H264 is the Proton donor of the active site.

Belongs to the LpxC family. It depends on Zn(2+) as a cofactor.

The enzyme catalyses a UDP-3-O-[(3R)-3-hydroxyacyl]-N-acetyl-alpha-D-glucosamine + H2O = a UDP-3-O-[(3R)-3-hydroxyacyl]-alpha-D-glucosamine + acetate. Its pathway is glycolipid biosynthesis; lipid IV(A) biosynthesis; lipid IV(A) from (3R)-3-hydroxytetradecanoyl-[acyl-carrier-protein] and UDP-N-acetyl-alpha-D-glucosamine: step 2/6. Catalyzes the hydrolysis of UDP-3-O-myristoyl-N-acetylglucosamine to form UDP-3-O-myristoylglucosamine and acetate, the committed step in lipid A biosynthesis. This is UDP-3-O-acyl-N-acetylglucosamine deacetylase from Xanthomonas axonopodis pv. citri (strain 306).